The chain runs to 454 residues: Pup--protein ligase (454 aa).

Glu9 contacts Mg(2+). Residue Arg53 participates in ATP binding. Residue Tyr55 participates in Mg(2+) binding. Asp57 serves as the catalytic Proton acceptor. Glu63 contributes to the Mg(2+) binding site. ATP contacts are provided by Thr66 and Trp420.

This sequence belongs to the Pup ligase/Pup deamidase family. Pup-conjugating enzyme subfamily.

The catalysed reaction is ATP + [prokaryotic ubiquitin-like protein]-L-glutamate + [protein]-L-lysine = ADP + phosphate + N(6)-([prokaryotic ubiquitin-like protein]-gamma-L-glutamyl)-[protein]-L-lysine.. Its pathway is protein degradation; proteasomal Pup-dependent pathway. It participates in protein modification; protein pupylation. Functionally, catalyzes the covalent attachment of the prokaryotic ubiquitin-like protein modifier Pup to the proteasomal substrate proteins, thereby targeting them for proteasomal degradation. This tagging system is termed pupylation. The ligation reaction involves the side-chain carboxylate of the C-terminal glutamate of Pup and the side-chain amino group of a substrate lysine. The chain is Pup--protein ligase from Paenarthrobacter aurescens (strain TC1).